Here is a 163-residue protein sequence, read N- to C-terminus: Thiol peroxidase (163 aa).

The Thioredoxin domain maps to 16 to 162 (LQVGDTAHDF…YDAAIAAVKS (147 aa)). Cys58 serves as the catalytic Cysteine sulfenic acid (-SOH) intermediate. Cys58 and Cys92 are joined by a disulfide.

The protein belongs to the peroxiredoxin family. Tpx subfamily. In terms of assembly, homodimer.

The catalysed reaction is a hydroperoxide + [thioredoxin]-dithiol = an alcohol + [thioredoxin]-disulfide + H2O. Its function is as follows. Thiol-specific peroxidase that catalyzes the reduction of hydrogen peroxide and organic hydroperoxides to water and alcohols, respectively. Plays a role in cell protection against oxidative stress by detoxifying peroxides. The polypeptide is Thiol peroxidase (Streptococcus sanguinis).